Consider the following 361-residue polypeptide: Queuine tRNA-ribosyltransferase (361 aa).

Asp-92 (proton acceptor) is an active-site residue. Substrate-binding positions include 92–96, Asp-146, Gln-189, and Gly-216; that span reads DSGGF. The segment at 247-253 is RNA binding; the sequence is GVGKPAD. The Nucleophile role is filled by Asp-266. Positions 271-275 are RNA binding; important for wobble base 34 recognition; sequence TRSGR. Cys-304, Cys-306, Cys-309, and His-335 together coordinate Zn(2+).

The protein belongs to the queuine tRNA-ribosyltransferase family. Homodimer. Within each dimer, one monomer is responsible for RNA recognition and catalysis, while the other monomer binds to the replacement base PreQ1. Requires Zn(2+) as cofactor.

It carries out the reaction 7-aminomethyl-7-carbaguanine + guanosine(34) in tRNA = 7-aminomethyl-7-carbaguanosine(34) in tRNA + guanine. It functions in the pathway tRNA modification; tRNA-queuosine biosynthesis. In terms of biological role, catalyzes the base-exchange of a guanine (G) residue with the queuine precursor 7-aminomethyl-7-deazaguanine (PreQ1) at position 34 (anticodon wobble position) in tRNAs with GU(N) anticodons (tRNA-Asp, -Asn, -His and -Tyr). Catalysis occurs through a double-displacement mechanism. The nucleophile active site attacks the C1' of nucleotide 34 to detach the guanine base from the RNA, forming a covalent enzyme-RNA intermediate. The proton acceptor active site deprotonates the incoming PreQ1, allowing a nucleophilic attack on the C1' of the ribose to form the product. After dissociation, two additional enzymatic reactions on the tRNA convert PreQ1 to queuine (Q), resulting in the hypermodified nucleoside queuosine (7-(((4,5-cis-dihydroxy-2-cyclopenten-1-yl)amino)methyl)-7-deazaguanosine). The protein is Queuine tRNA-ribosyltransferase of Rickettsia bellii (strain OSU 85-389).